Here is a 396-residue protein sequence, read N- to C-terminus: Pinosylvin synthase 1 (396 aa).

60-63 contacts substrate; sequence KFKR. Cys170 is a catalytic residue. Substrate-binding positions include Leu273 and 311-313; that span reads GGH.

The protein belongs to the thiolase-like superfamily. Chalcone/stilbene synthases family. In terms of assembly, homodimer.

The protein resides in the cytoplasm. The catalysed reaction is (E)-cinnamoyl-CoA + 3 malonyl-CoA + 3 H(+) = (E)-pinosylvin + 4 CO2 + 4 CoA. The enzyme catalyses 3-phenylpropanoyl-CoA + 3 malonyl-CoA + 3 H(+) = dihydropinosylvin + 4 CO2 + 4 CoA. It participates in phytoalexin biosynthesis; pinosylvin biosynthesis. Functionally, catalyzes the production of pinosylvin from cinnamoyl-CoA and malonyl-CoA, and dihydropinosylvin from dihydrocinnamoyl-CoA. This chain is Pinosylvin synthase 1, found in Pinus strobus (Eastern white pine).